A 528-amino-acid polypeptide reads, in one-letter code: Beta-galactoside alpha-2,6-sialyltransferase 2 (528 aa).

Residues 1-10 (MKPNLKQWKQ) lie on the Cytoplasmic side of the membrane. Residues 11-31 (LMLFGIFAWGLLFLVIFIYFT) form a helical; Signal-anchor for type II membrane protein membrane-spanning segment. Residues 32-528 (DSNSAEPVPS…CPERNNFPPL (497 aa)) are Lumenal-facing. 3 N-linked (GlcNAc...) asparagine glycosylation sites follow: Asn-167, Asn-308, and Asn-338. 3 disulfides stabilise this stretch: Cys-254-Cys-519, Cys-297-Cys-448, and Cys-466-Cys-477.

The protein belongs to the glycosyltransferase 29 family.

The protein localises to the golgi apparatus. It localises to the golgi stack membrane. It catalyses the reaction a beta-D-galactoside + CMP-N-acetyl-beta-neuraminate = an N-acetyl-alpha-neuraminyl-(2-&gt;6)-beta-D-galactosyl derivative + CMP + H(+). Its function is as follows. Transfers sialic acid from the donor of substrate CMP-sialic acid to galactose containing acceptor substrates. The sequence is that of Beta-galactoside alpha-2,6-sialyltransferase 2 (ST6GAL2) from Gallus gallus (Chicken).